Consider the following 495-residue polypeptide: Putative FAD-containing monooxygenase MymA (495 aa).

FAD-binding positions include serine 15, glutamate 36, tryptophan 45, 56-57, and valine 104; that span reads DS.

The protein belongs to the FAD-binding monooxygenase family. FAD is required as a cofactor.

Its function is as follows. Required for maintaining the appropriate mycolic acid composition and permeability of the envelope on its exposure to acidic pH. The sequence is that of Putative FAD-containing monooxygenase MymA (mymA) from Mycobacterium tuberculosis (strain CDC 1551 / Oshkosh).